Consider the following 116-residue polypeptide: Large ribosomal subunit protein bL17 (116 aa).

The protein belongs to the bacterial ribosomal protein bL17 family. In terms of assembly, part of the 50S ribosomal subunit. Contacts protein L32.

The protein is Large ribosomal subunit protein bL17 of Synechococcus sp. (strain RCC307).